Here is a 316-residue protein sequence, read N- to C-terminus: UPF0761 membrane protein PM1616 (316 aa).

Transmembrane regions (helical) follow at residues 36-56 (MLAL…FPVF), 92-112 (QMSA…INSI), 128-148 (LVFS…LIGA), 172-192 (ILSF…YTVV), 204-224 (IGAL…LWYV), and 236-256 (AMAT…VILI).

It belongs to the UPF0761 family.

The protein localises to the cell inner membrane. The chain is UPF0761 membrane protein PM1616 from Pasteurella multocida (strain Pm70).